The following is a 1317-amino-acid chain: Kinesin-like protein KIF16B (1317 aa).

The region spanning S3–I358 is the Kinesin motor domain. G102–S109 contributes to the ATP binding site. The stretch at V370 to K425 forms a coiled coil. Position 398 is a phosphoserine (S398). The FHA domain maps to T478 to I529. T577 carries the post-translational modification Phosphothreonine. S582 bears the Phosphoserine mark. 2 coiled-coil regions span residues G595–V882 and L936–D1087. Positions L1036–G1048 are enriched in polar residues. A disordered region spans residues L1036–Q1057. A Phosphoserine modification is found at S1052. Positions D1182–T1296 constitute a PX domain.

This sequence belongs to the TRAFAC class myosin-kinesin ATPase superfamily. Kinesin family. In terms of assembly, interacts with RAB14. Interacts with PTPN21. In terms of tissue distribution, primarily expressed in brain. Also present in kidney, liver, intestine, placenta, leukocytes, heart and skeletal muscle (at protein level).

Its subcellular location is the cytoplasm. The protein resides in the cytoskeleton. It localises to the early endosome membrane. The protein localises to the spindle. Functionally, plus end-directed microtubule-dependent motor protein involved in endosome transport and receptor recycling and degradation. Regulates the plus end motility of early endosomes and the balance between recycling and degradation of receptors such as EGF receptor (EGFR) and FGF receptor (FGFR). Regulates the Golgi to endosome transport of FGFR-containing vesicles during early development, a key process for developing basement membrane and epiblast and primitive endoderm lineages during early postimplantation development. In Homo sapiens (Human), this protein is Kinesin-like protein KIF16B (KIF16B).